A 394-amino-acid polypeptide reads, in one-letter code: Elongation factor Tu (394 aa).

The tr-type G domain maps to 10 to 204 (KPHVNIGTIG…AVDSYIPQPI (195 aa)). The G1 stretch occupies residues 19–26 (GHVDHGKT). 19–26 (GHVDHGKT) contributes to the GTP binding site. Mg(2+) is bound at residue threonine 26. A G2 region spans residues 60–64 (GITIS). Positions 81–84 (DCPG) are G3. Residues 81–85 (DCPGH) and 136–139 (NKVD) contribute to the GTP site. Residues 136–139 (NKVD) form a G4 region. The segment at 174 to 176 (SAL) is G5.

It belongs to the TRAFAC class translation factor GTPase superfamily. Classic translation factor GTPase family. EF-Tu/EF-1A subfamily. As to quaternary structure, monomer.

The protein resides in the cytoplasm. The enzyme catalyses GTP + H2O = GDP + phosphate + H(+). GTP hydrolase that promotes the GTP-dependent binding of aminoacyl-tRNA to the A-site of ribosomes during protein biosynthesis. The polypeptide is Elongation factor Tu (Rickettsia typhi (strain ATCC VR-144 / Wilmington)).